Here is a 327-residue protein sequence, read N- to C-terminus: MGRDQVSHKRSQNSNVSEIPDLDSSLHRSEDTLVAEIIEAMTLAGVCVVRNLFTKSLVDQVLKDFEPHVSSTKLFDGYPGNGCHLTGLLSKSEIYAHMVVGNSVFEKVRNHFLSTTFRSWIGGKMMTFTSPPQLDSTICSYINPQSPGEHLHRDDAIHYGWNEAASEYTVGRDISMSMFLALTESTRENGTTRFFPGSHLWDYSQDFPSADDTRIRYAELHPGDCYFMLSSVTHSSTDNRSTNRPRVLAATIVTRSHLRQEENQYLTYDPITVGRFPTWLQRLVGYAPSAPFLGWVDKRDPRCVIDPKAADDHCGGEYYETNEETLN.

The disordered stretch occupies residues 1 to 22 (MGRDQVSHKRSQNSNVSEIPDL). Fe cation is bound by residues His-152, Asp-154, and His-234.

It belongs to the PhyH family. In terms of assembly, homodimer. It depends on Fe cation as a cofactor.

It carries out the reaction fumigatonoid B = fumigatonoid C. It participates in secondary metabolite biosynthesis; terpenoid biosynthesis. Its function is as follows. Fumigatonoid B endoperoxide isomerase; part of the gene cluster that mediates the biosynthesis of novofumigatonin, a heavily oxygenated meroterpenoid containing a unique orthoester moiety. The first step of the pathway is the synthesis of 3,5-dimethylorsellinic acid (DMOA) by the polyketide synthase nvfA via condensation of one acetyl-CoA starter unit with 3 malonyl-CoA units and 2 methylations. DMOA is then converted to farnesyl-DMOA by the farnesyltransferase nvfB. Epoxydation by FAD-dependent monooxygenase nvfK, followed by a protonation-initiated cyclization catalyzed by the terpene cyclase nvfL leads to the production of asnavolin H. The short chain dehydrogenase nvfC then as a 3-OH dehydrogenase of asnovolin H to yield chemesin D. There are two branches to synthesize asnovolin A from chemesin D. In one branch, chemesin D undergoes Baeyer-Villiger oxidation by nvfH, methylation by nvfJ, and enoyl reduction by the nvfM D enoylreductase that reduces the double bond between C-5'and C-6', to form respectively asnovolin I, asnovolin K, and asnovolin A. In the other branch, the methylation precedes the Baeyer-Villiger oxidation and the enoyl reduction to yield asnovolin A via the asnovolin J intermediate. Asnovolin A is further converted to fumigatonoid A by the Fe(II)/2-oxoglutarate-dependent dioxygenase nvfI that catalyzes an endoperoxidation reaction. The alpha/beta hydrolase nvfD then acts as an epimerase that converts fumigatonoid A to its C-5' epimer, which then undergoes spontaneous or nvfD-catalyzed lactonization. The following step utilizes the ketoreductase nvfG to produce fumigatonoid B. The dioxygenase nvfE further converts fumigatonoid B into fumigatonoid C. Finally the Fe(II)/2-oxoglutarate-dependent dioxygenase nvfF catalyzes two rounds of oxidation to transform fumigatonoid C into the end product, novofumigatonin A. The protein is Fumigatonoid B endoperoxide isomerase nvfE of Aspergillus novofumigatus (strain IBT 16806).